The chain runs to 72 residues: MKAELTAIIEAAEDGGYWAICPEIPGANGQGDTIAEAKASLKSAIQLIVEDRLEDIRRGLPEEAIEETILIP.

It belongs to the UPF0150 family.

The protein is UPF0150 protein ssl0738 of Synechocystis sp. (strain ATCC 27184 / PCC 6803 / Kazusa).